The following is a 276-amino-acid chain: Diacetylchitobiose uptake system permease protein DasC (276 aa).

6 helical membrane passes run 14–34 (TAVV…ATAF), 74–94 (LIVT…GSFA), 105–125 (GFIV…VIAI), 137–157 (SLVP…ILTL), 186–206 (VILP…FITA), and 241–261 (GATM…FVYL). One can recognise an ABC transmembrane type-1 domain in the interval 70 to 261 (VSNSLIVTVC…IPILILFVYL (192 aa)).

The protein belongs to the binding-protein-dependent transport system permease family. In terms of assembly, the complex is composed of two ATP-binding proteins (MsiK), two transmembrane proteins (DasB and DasC) and a solute-binding protein (DasA).

Its subcellular location is the cell membrane. In terms of biological role, part of the ABC transporter complex DasABC-MsiK involved in N,N'-diacetylchitobiose ((GlcNAc)2) uptake. Responsible for the translocation of the substrate across the membrane. The protein is Diacetylchitobiose uptake system permease protein DasC of Streptomyces coelicolor (strain ATCC BAA-471 / A3(2) / M145).